Reading from the N-terminus, the 71-residue chain is DNA-directed RNA polymerase subunit omega (71 aa).

This sequence belongs to the RNA polymerase subunit omega family. As to quaternary structure, the RNAP catalytic core consists of 2 alpha, 1 beta, 1 beta' and 1 omega subunit. When a sigma factor is associated with the core the holoenzyme is formed, which can initiate transcription.

The catalysed reaction is RNA(n) + a ribonucleoside 5'-triphosphate = RNA(n+1) + diphosphate. Functionally, promotes RNA polymerase assembly. Latches the N- and C-terminal regions of the beta' subunit thereby facilitating its interaction with the beta and alpha subunits. This Azoarcus sp. (strain BH72) protein is DNA-directed RNA polymerase subunit omega.